The following is a 512-amino-acid chain: Cytochrome P450 1A2 (512 aa).

The O-linked (GlcNAc) serine glycan is linked to Ser-65. Phe-222 contributes to the substrate binding site. Cys-454 contacts heme.

The protein belongs to the cytochrome P450 family. As to quaternary structure, interacts with PGRMC1; the interaction requires PGRMC1 homodimerization. Heme serves as cofactor. As to expression, constitutively expressed in liver.

It localises to the endoplasmic reticulum membrane. The protein localises to the microsome membrane. It carries out the reaction an organic molecule + reduced [NADPH--hemoprotein reductase] + O2 = an alcohol + oxidized [NADPH--hemoprotein reductase] + H2O + H(+). The enzyme catalyses 17beta-estradiol + reduced [NADPH--hemoprotein reductase] + O2 = 2-hydroxy-17beta-estradiol + oxidized [NADPH--hemoprotein reductase] + H2O + H(+). It catalyses the reaction 17beta-estradiol + reduced [NADPH--hemoprotein reductase] + O2 = 4-hydroxy-17beta-estradiol + oxidized [NADPH--hemoprotein reductase] + H2O + H(+). The catalysed reaction is estrone + reduced [NADPH--hemoprotein reductase] + O2 = 2-hydroxyestrone + oxidized [NADPH--hemoprotein reductase] + H2O + H(+). It carries out the reaction estrone + reduced [NADPH--hemoprotein reductase] + O2 = 4-hydroxyestrone + oxidized [NADPH--hemoprotein reductase] + H2O + H(+). The enzyme catalyses cholesterol + reduced [NADPH--hemoprotein reductase] + O2 = 25-hydroxycholesterol + oxidized [NADPH--hemoprotein reductase] + H2O + H(+). It catalyses the reaction all-trans-retinol + reduced [NADPH--hemoprotein reductase] + O2 = all-trans-retinal + oxidized [NADPH--hemoprotein reductase] + 2 H2O + H(+). The catalysed reaction is all-trans-retinal + reduced [NADPH--hemoprotein reductase] + O2 = all-trans-retinoate + oxidized [NADPH--hemoprotein reductase] + H2O + 2 H(+). It carries out the reaction (5Z,8Z,11Z,14Z)-eicosatetraenoate + reduced [NADPH--hemoprotein reductase] + O2 = (14R,15S)-epoxy-(5Z,8Z,11Z)-eicosatrienoate + oxidized [NADPH--hemoprotein reductase] + H2O + H(+). The enzyme catalyses (5Z,8Z,11Z,14Z)-eicosatetraenoate + reduced [NADPH--hemoprotein reductase] + O2 = (14S,15R)-epoxy-(5Z,8Z,11Z)-eicosatrienoate + oxidized [NADPH--hemoprotein reductase] + H2O + H(+). It catalyses the reaction (5Z,8Z,11Z,14Z,17Z)-eicosapentaenoate + reduced [NADPH--hemoprotein reductase] + O2 = (17R,18S)-epoxy-(5Z,8Z,11Z,14Z)-eicosatetraenoate + oxidized [NADPH--hemoprotein reductase] + H2O + H(+). The catalysed reaction is (4Z,7Z,10Z,13Z,16Z,19Z)-docosahexaenoate + reduced [NADPH--hemoprotein reductase] + O2 = (19R,20S)-epoxy-(4Z,7Z,10Z,13Z,16Z)-docosapentaenoate + oxidized [NADPH--hemoprotein reductase] + H2O + H(+). It carries out the reaction (5S)-hydroperoxy-(6E,8Z,11Z,14Z)-eicosatetraenoate = 5-oxo-(6E,8Z,11Z,14Z)-eicosatetraenoate + H2O. The enzyme catalyses (12S)-hydroperoxy-(5Z,8Z,10E,14Z)-eicosatetraenoate = 12-oxo-(5Z,8Z,10E,14Z)-eicosatetraenoate + H2O. It catalyses the reaction (15S)-hydroperoxy-(5Z,8Z,11Z,13E)-eicosatetraenoate = 15-oxo-(5Z,8Z,11Z,13E)-eicosatetraenoate + H2O. The catalysed reaction is (13S)-hydroperoxy-(9Z,11E)-octadecadienoate = 13-oxo-(9Z,11E)-octadecadienoate + H2O. It carries out the reaction (5Z,8Z,11Z,14Z)-eicosatetraenoate + reduced [NADPH--hemoprotein reductase] + O2 = 13-hydroxy-(5Z,8Z,11Z,14Z)-eicosatetraenoate + oxidized [NADPH--hemoprotein reductase] + H2O + H(+). The enzyme catalyses (5Z,8Z,11Z,14Z)-eicosatetraenoate + reduced [NADPH--hemoprotein reductase] + O2 = 19-hydroxy-(5Z,8Z,11Z,14Z)-eicosatetraenoate + oxidized [NADPH--hemoprotein reductase] + H2O + H(+). It catalyses the reaction (9Z,12Z)-octadecadienoate + reduced [NADPH--hemoprotein reductase] + O2 = 11-hydroxy-(9Z,12Z)-octadecadienoate + oxidized [NADPH--hemoprotein reductase] + H2O + H(+). Its pathway is cofactor metabolism; retinol metabolism. It participates in steroid metabolism; cholesterol metabolism. The protein operates within lipid metabolism; arachidonate metabolism. Functionally, a cytochrome P450 monooxygenase involved in the metabolism of various endogenous substrates, including fatty acids, steroid hormones and vitamins. Mechanistically, uses molecular oxygen inserting one oxygen atom into a substrate, and reducing the second into a water molecule, with two electrons provided by NADPH via cytochrome P450 reductase (NADPH--hemoprotein reductase). Catalyzes the hydroxylation of carbon-hydrogen bonds. Exhibits high catalytic activity for the formation of hydroxyestrogens from estrone (E1) and 17beta-estradiol (E2), namely 2-hydroxy E1 and E2. Metabolizes cholesterol toward 25-hydroxycholesterol, a physiological regulator of cellular cholesterol homeostasis. May act as a major enzyme for all-trans retinoic acid biosynthesis in the liver. Catalyzes two successive oxidative transformation of all-trans retinol to all-trans retinal and then to the active form all-trans retinoic acid. Primarily catalyzes stereoselective epoxidation of the last double bond of polyunsaturated fatty acids (PUFA), displaying a strong preference for the (R,S) stereoisomer. Catalyzes bisallylic hydroxylation and omega-1 hydroxylation of PUFA. May also participate in eicosanoids metabolism by converting hydroperoxide species into oxo metabolites (lipoxygenase-like reaction, NADPH-independent). Plays a role in the oxidative metabolism of xenobiotics. Catalyzes the N-hydroxylation of heterocyclic amines and the O-deethylation of phenacetin. Metabolizes caffeine via N3-demethylation. The polypeptide is Cytochrome P450 1A2 (CYP1A2) (Canis lupus familiaris (Dog)).